A 330-amino-acid chain; its full sequence is G-protein coupled receptor 3 (330 aa).

Residues 1–42 (MMWGAGSSMAWFSAGSGSVNVSSVDPVEEPTGPATLLPSPRA) are Extracellular-facing. Asn20 carries N-linked (GlcNAc...) asparagine glycosylation. A helical membrane pass occupies residues 43-62 (WDVVLCISGTLVSCENALVV). Over 63–74 (AIIVGTPAFRAP) the chain is Cytoplasmic. The chain crosses the membrane as a helical span at residues 75–98 (MFLLVGSLAVADLLAGLGLVLHFA). Residues 99 to 110 (ADFCIGSPEMSL) lie on the Extracellular side of the membrane. The chain crosses the membrane as a helical span at residues 111–132 (MLVGVLAMAFTASIGSLLAITV). Topologically, residues 133 to 153 (DRYLSLYNALTYYSETTVTRT) are cytoplasmic. A helical membrane pass occupies residues 154–173 (YVMLALVWVGALGLGLVPVL). Topologically, residues 174–198 (AWNCRDGLTTCGVVYPLSKNHLVVL) are extracellular. Residues 199–217 (AIAFFMVFGIMLQLYAQIC) traverse the membrane as a helical segment. At 218–245 (RIVCRHAQQIALQRHLLPASHYVATRKG) the chain is on the cytoplasmic side. The chain crosses the membrane as a helical span at residues 246–272 (IATLAVVLGAFAACWLPFTVYCLLGDA). Over 273-277 (DSPRL) the chain is Extracellular. The chain crosses the membrane as a helical span at residues 278–299 (YTYLTLLPATYNSMINPVIYAF). Topologically, residues 300-330 (RNQDVQKVLWAICCCCSTSKIPFRSRSPSDV) are cytoplasmic. The S-palmitoyl cysteine moiety is linked to residue Cys313. A phosphoserine mark is found at Ser324, Ser326, and Ser328.

Belongs to the G-protein coupled receptor 1 family. Expressed in both the forebrain and hindbrain, with the highest level in habenula. Lower level expression in the testis. Expressed in several metabolically active peripheral tissues, although at lower levels than in the central nervous system (CNS).

It localises to the cell membrane. Constitutively active G-protein coupled receptor that maintains high 3'-5'-cyclic adenosine monophosphate (cAMP) levels that a plays a role in serveral processes including meiotic arrest in oocytes or neuronal development via activation of numerous intracellular signaling pathways. Acts as an essential activator of thermogenic adipocytes and drives thermogenesis via its intrinsic G(s)-coupling activity without the requirement of a ligand. Has a potential role in modulating a number of brain functions, including behavioral responses to stress, amyloid-beta peptide generation in neurons. Stimulates neurite outgrowth in cerebellar granular neurons modulated via PKA, ERK, and most strongly PI3K-mediated signaling pathways. In Mus musculus (Mouse), this protein is G-protein coupled receptor 3 (Gpr3).